A 417-amino-acid chain; its full sequence is MSTAISPLAPTDVPDLPEIAGVRLATAAAGIRYKGRTDVLLALLDEGTTVAGVFTRSRCPSAPVEWCRARLKDGHHAKAGLALVVNSGNANAFTGKTGRQATKLTAGIAAKAAGCKASDIYLASTGVIGEPLDATKFNGVLETLASEAAPDRWMDAARAIMTTDTFPKVATARVKLGKAAVTINGIAKGAGMIAPDMATMLSFIFTDAPITATALQSLLKSGVEDTFNAVTIDSDTSTSDTLLAFATGAAGARGAPRISRAGDPRLKAFVKAFHGVLADLAEQVARDGEGARKLVEVIVEGATSKASARKIAKSIANSPLVKTAIAGEDANWGRVVMAVGKAGEPADRDKLSIYFNGIRVAKSGARDPSYDEAEVSKAMKNDRIQIKTTLGLGKGRDRVLTCDLTKEYVAINGDYRS.

Thr162, Lys188, Thr199, Glu289, Asn412, and Ser417 together coordinate substrate. The active-site Nucleophile is the Thr199.

This sequence belongs to the ArgJ family. Heterotetramer of two alpha and two beta chains.

Its subcellular location is the cytoplasm. The enzyme catalyses N(2)-acetyl-L-ornithine + L-glutamate = N-acetyl-L-glutamate + L-ornithine. It catalyses the reaction L-glutamate + acetyl-CoA = N-acetyl-L-glutamate + CoA + H(+). It participates in amino-acid biosynthesis; L-arginine biosynthesis; L-ornithine and N-acetyl-L-glutamate from L-glutamate and N(2)-acetyl-L-ornithine (cyclic): step 1/1. The protein operates within amino-acid biosynthesis; L-arginine biosynthesis; N(2)-acetyl-L-ornithine from L-glutamate: step 1/4. Catalyzes two activities which are involved in the cyclic version of arginine biosynthesis: the synthesis of N-acetylglutamate from glutamate and acetyl-CoA as the acetyl donor, and of ornithine by transacetylation between N(2)-acetylornithine and glutamate. The chain is Arginine biosynthesis bifunctional protein ArgJ from Nitrobacter winogradskyi (strain ATCC 25391 / DSM 10237 / CIP 104748 / NCIMB 11846 / Nb-255).